The following is a 119-amino-acid chain: Ribosome-binding factor A (119 aa).

Belongs to the RbfA family. As to quaternary structure, monomer. Binds 30S ribosomal subunits, but not 50S ribosomal subunits or 70S ribosomes.

Its subcellular location is the cytoplasm. Its function is as follows. One of several proteins that assist in the late maturation steps of the functional core of the 30S ribosomal subunit. Associates with free 30S ribosomal subunits (but not with 30S subunits that are part of 70S ribosomes or polysomes). Required for efficient processing of 16S rRNA. May interact with the 5'-terminal helix region of 16S rRNA. In Chlorobium limicola (strain DSM 245 / NBRC 103803 / 6330), this protein is Ribosome-binding factor A.